The chain runs to 171 residues: MSDHKKAILAGGCFWGMQDLIRKQPGVVSTRVGYTGGQNDHPTYRNHPGHAESIEITYDPAQTDYRALLEFFFQIHDPTTKNRQGNDVGTSYRSAIFYVDDEQKRVALDTIADVDASGLWPGKVVTEVTPAGEFWEAEPEHQDYLERMPWGYTCHFPRPDWKLPKRADAKA.

The active site involves C13.

It belongs to the MsrA Met sulfoxide reductase family.

The enzyme catalyses L-methionyl-[protein] + [thioredoxin]-disulfide + H2O = L-methionyl-(S)-S-oxide-[protein] + [thioredoxin]-dithiol. The catalysed reaction is [thioredoxin]-disulfide + L-methionine + H2O = L-methionine (S)-S-oxide + [thioredoxin]-dithiol. Functionally, has an important function as a repair enzyme for proteins that have been inactivated by oxidation. Catalyzes the reversible oxidation-reduction of methionine sulfoxide in proteins to methionine. The chain is Peptide methionine sulfoxide reductase MsrA from Mycobacterium sp. (strain MCS).